The sequence spans 681 residues: DNA ligase (681 aa).

Residues 45–49, 94–95, and Glu-120 each bind NAD(+); these read DFDFD and SL. Catalysis depends on Lys-122, which acts as the N6-AMP-lysine intermediate. Residues Arg-143, Glu-177, Lys-289, and Lys-313 each coordinate NAD(+). Residues Cys-403, Cys-406, Cys-421, and Cys-426 each coordinate Zn(2+). The region spanning 593–681 is the BRCT domain; the sequence is ADQQPFAGQS…SLKIDFKNLI (89 aa).

This sequence belongs to the NAD-dependent DNA ligase family. LigA subfamily. Mg(2+) serves as cofactor. Requires Mn(2+) as cofactor.

It carries out the reaction NAD(+) + (deoxyribonucleotide)n-3'-hydroxyl + 5'-phospho-(deoxyribonucleotide)m = (deoxyribonucleotide)n+m + AMP + beta-nicotinamide D-nucleotide.. In terms of biological role, DNA ligase that catalyzes the formation of phosphodiester linkages between 5'-phosphoryl and 3'-hydroxyl groups in double-stranded DNA using NAD as a coenzyme and as the energy source for the reaction. It is essential for DNA replication and repair of damaged DNA. The chain is DNA ligase from Leptospira interrogans serogroup Icterohaemorrhagiae serovar copenhageni (strain Fiocruz L1-130).